The primary structure comprises 135 residues: Endocuticle structural glycoprotein SgAbd-2 (135 aa).

Glutamine 1 carries the post-translational modification Pyrrolidone carboxylic acid. O-linked (HexNAc...) threonine glycans are attached at residues threonine 11 and threonine 100. The 71-residue stretch at 32-102 (DGSYAYSYQT…AEGAHLPTPP (71 aa)) folds into the Chitin-binding type R&amp;R domain.

Functionally, component of the abdominal endocuticle. This is Endocuticle structural glycoprotein SgAbd-2 from Schistocerca gregaria (Desert locust).